The sequence spans 565 residues: Urocanate hydratase (565 aa).

Residues 61-62 (GG), Gln139, 185-187 (GMG), Glu205, Arg210, 251-252 (NA), 272-276 (QTSAH), 282-283 (YL), and Tyr331 contribute to the NAD(+) site. Cys419 is a catalytic residue. The disordered stretch occupies residues 453-472 (LDSGSVASPNRETESMRDGS). Over residues 463-472 (RETESMRDGS) the composition is skewed to basic and acidic residues. Residue Gly501 coordinates NAD(+).

This sequence belongs to the urocanase family. It depends on NAD(+) as a cofactor.

It is found in the cytoplasm. It catalyses the reaction 4-imidazolone-5-propanoate = trans-urocanate + H2O. It participates in amino-acid degradation; L-histidine degradation into L-glutamate; N-formimidoyl-L-glutamate from L-histidine: step 2/3. Catalyzes the conversion of urocanate to 4-imidazolone-5-propionate. This Pseudomonas syringae pv. tomato (strain ATCC BAA-871 / DC3000) protein is Urocanate hydratase.